Here is an 860-residue protein sequence, read N- to C-terminus: Pentatricopeptide repeat-containing protein At2g40720 (860 aa).

PPR repeat units lie at residues 59-93 (SVFT…GWRY), 94-124 (DPFI…WSQS), 132-166 (DVTV…GVRP), 167-203 (DAFS…SLDT), 204-234 (DSFL…IEDK), 236-270 (NVVL…SVKL), 271-305 (VSTS…GLHN), 306-340 (DPYV…RLEI), 341-371 (WNAM…SVLP), 372-406 (DSFT…PIQS), 407-437 (TSTI…MEEK), 438-472 (DMVA…DDSL), 475-509 (DSDI…GLVL), 510-540 (NVFV…MSTE), 541-575 (NMVA…GIFP), 576-610 (DSVS…GIPS), 611-641 (DTHL…MQHK), 642-676 (SLIT…GESP), 677-707 (DDVT…MKQD), and 713-743 (NMEH…MPIE). Residues 748 to 823 (IWLCLLSASR…QPGCSWIEVS (76 aa)) are type E motif. The tract at residues 824–854 (DRTNVFFSGGSSSPMKAEIFNVLNRLKSNMV) is type E(+) motif.

This sequence belongs to the PPR family. PCMP-E subfamily.

The sequence is that of Pentatricopeptide repeat-containing protein At2g40720 (PCMP-E26) from Arabidopsis thaliana (Mouse-ear cress).